Here is a 117-residue protein sequence, read N- to C-terminus: Transcription elongation factor SPT4 (117 aa).

The tract at residues 1–40 (MSLETVPKDLRHLRACLLCSLVKTIDQFEYDGCDNCESYL) is interaction with SUPT5H. A C4-type zinc finger spans residues 16 to 36 (CLLCSLVKTIDQFEYDGCDNC).

This sequence belongs to the SPT4 family. In terms of assembly, interacts with SUPT5H to form the DSIF complex. DSIF interacts with RNA polymerase II and with the positive transcription elongation factor b complex (P-TEFb complex), which is composed of CDK9 and cyclin-T.

Its subcellular location is the nucleus. In terms of biological role, may function as a component of the DRB sensitivity-inducing factor complex (DSIF complex), which regulates transcription elongation by RNA polymerase II. Probably enhances transcriptional pausing at sites proximal to the promoter, which may facilitate the assembly of an elongation competent RNA polymerase II complex. Also acts to stimulate transcriptional elongation at low nucleotide concentrations. Regulation of transcriptional elongation by this protein is required for the expression of genes which control neuronal development. This is Transcription elongation factor SPT4 (supt4h1) from Danio rerio (Zebrafish).